The chain runs to 185 residues: Adenylate kinase (185 aa).

ATP is bound at residue 8–16; it reads GIPGSGSTT.

This sequence belongs to the archaeal adenylate kinase family.

Its subcellular location is the cytoplasm. It carries out the reaction AMP + ATP = 2 ADP. This is Adenylate kinase (adkA) from Methanothermobacter thermautotrophicus (strain ATCC 29096 / DSM 1053 / JCM 10044 / NBRC 100330 / Delta H) (Methanobacterium thermoautotrophicum).